Consider the following 414-residue polypeptide: 2,3-diketo-5-methylthiopentyl-1-phosphate enolase (414 aa).

Lys99 functions as the Proton acceptor in the catalytic mechanism. Residues Lys148, 174–177 (KDDE), His265, Gly338, and 360–361 (GG) each bind substrate. Mg(2+)-binding residues include Lys174, Asp176, and Glu177. Position 174 is an N6-carboxylysine (Lys174).

It belongs to the RuBisCO large chain family. Type IV subfamily. As to quaternary structure, homodimer. Mg(2+) is required as a cofactor.

The catalysed reaction is 5-methylsulfanyl-2,3-dioxopentyl phosphate = 2-hydroxy-5-methylsulfanyl-3-oxopent-1-enyl phosphate. Its pathway is amino-acid biosynthesis; L-methionine biosynthesis via salvage pathway; L-methionine from S-methyl-5-thio-alpha-D-ribose 1-phosphate: step 3/6. Its function is as follows. Catalyzes the enolization of 2,3-diketo-5-methylthiopentyl-1-phosphate (DK-MTP-1-P) into 2-hydroxy-3-keto-5-methylthiopentenyl-1-phosphate (HK-MTPenyl-1-P). This Bacillus cereus (strain G9842) protein is 2,3-diketo-5-methylthiopentyl-1-phosphate enolase.